The chain runs to 86 residues: Small ribosomal subunit protein uS17 (86 aa).

Belongs to the universal ribosomal protein uS17 family. Part of the 30S ribosomal subunit.

Its function is as follows. One of the primary rRNA binding proteins, it binds specifically to the 5'-end of 16S ribosomal RNA. In Methylococcus capsulatus (strain ATCC 33009 / NCIMB 11132 / Bath), this protein is Small ribosomal subunit protein uS17.